The following is a 188-amino-acid chain: Anaphase-promoting complex subunit 10 (188 aa).

The DOC domain occupies 4 to 187 (NSNINSNSRL…SPEVSMFQTL (184 aa)).

It belongs to the APC10 family. The APC/C is composed of at least 13 subunits that stay tightly associated throughout the cell cycle: anapc1, anapc2, anapc3, anapc4, anapc5, anapc6, anapc7, anapc8, anapc10, anapc11, cdc20, cdc26 and cdh1.

It is found in the nucleus. Its pathway is protein modification; protein ubiquitination. In terms of biological role, component of the anaphase promoting complex/cyclosome (APC/C), a cell cycle-regulated E3 ubiquitin-protein ligase complex that controls progression through mitosis and the G1 phase of the cell cycle. The polypeptide is Anaphase-promoting complex subunit 10 (anapc10) (Dictyostelium discoideum (Social amoeba)).